The sequence spans 277 residues: MALKKFNPTTPSRRQMTMPTFEEVTTNAPEKSLLVSLKKTGGRNAQGKITVRHHGGGAKRKYRIIDFKRNKDGIPAKVATVEYDPNRSAYIALVVYADGEKRYILAPVGLKVGDTVVSGPEADIKPGNALQLKHMPVGTFVHNIELQAGKGGQMVRSAGTSAQLMAKEGNYATLRLPSGEMRYVRIECKATVGTVSNTTHEIVNIGKAGRKRHMGWRPTVRGSVMNPCDHPHGGGEGRSPIGRPSPVTPWGKPALGYKTRKNKKYSDRFIIKRRNAK.

A disordered region spans residues Gly222–Lys258.

The protein belongs to the universal ribosomal protein uL2 family. As to quaternary structure, part of the 50S ribosomal subunit. Forms a bridge to the 30S subunit in the 70S ribosome.

Its function is as follows. One of the primary rRNA binding proteins. Required for association of the 30S and 50S subunits to form the 70S ribosome, for tRNA binding and peptide bond formation. It has been suggested to have peptidyltransferase activity; this is somewhat controversial. Makes several contacts with the 16S rRNA in the 70S ribosome. In Clostridium perfringens (strain 13 / Type A), this protein is Large ribosomal subunit protein uL2.